Consider the following 691-residue polypeptide: Elongation factor G (691 aa).

One can recognise a tr-type G domain in the interval 8–282; that stretch reads ERVRNIGIAA…AVVNYLPAPV (275 aa). GTP contacts are provided by residues 17-24, 81-85, and 135-138; these read AHIDAGKT, DTPGH, and NKMD.

Belongs to the TRAFAC class translation factor GTPase superfamily. Classic translation factor GTPase family. EF-G/EF-2 subfamily.

It is found in the cytoplasm. In terms of biological role, catalyzes the GTP-dependent ribosomal translocation step during translation elongation. During this step, the ribosome changes from the pre-translocational (PRE) to the post-translocational (POST) state as the newly formed A-site-bound peptidyl-tRNA and P-site-bound deacylated tRNA move to the P and E sites, respectively. Catalyzes the coordinated movement of the two tRNA molecules, the mRNA and conformational changes in the ribosome. The chain is Elongation factor G from Prochlorococcus marinus (strain NATL1A).